Reading from the N-terminus, the 466-residue chain is Ankyrin repeat and SOCS box protein 18 (466 aa).

ANK repeat units lie at residues 119–148, 151–180, 184–213, 218–247, 251–288, and 292–321; these read ELTTPLCIAAAHGHTACVRHLLGRGADPDA, GGRGALHEACLGGHTACVRLLLQHRADPDL, EGLAPLHLCRTAASLGCAQALLEHGASVQR, GRDTPLHVAAQRGLDEHARLYLGRGAHVDA, RGETALSAACGAARRPDEHGRCLRLCALLLRRGAEADA, and DERSPLHKACGHASHSLARLLLRHGADAGA. One can recognise an SOCS box domain in the interval 405 to 463; the sequence is QMHKPFYQSLFALALTPRCLQHLCRCALRRLFGKRCFDLIPLLPLPKPLQNYLLLEPQG.

The protein belongs to the ankyrin SOCS box (ASB) family.

It functions in the pathway protein modification; protein ubiquitination. May be a substrate-recognition component of a SCF-like ECS (Elongin-Cullin-SOCS-box protein) E3 ubiquitin-protein ligase complex which mediates the ubiquitination and subsequent proteasomal degradation of target proteins. In Homo sapiens (Human), this protein is Ankyrin repeat and SOCS box protein 18 (ASB18).